Here is a 265-residue protein sequence, read N- to C-terminus: Protein N-terminal and lysine N-methyltransferase EFM7 (265 aa).

Residues W55, 81–83 (GAA), D103, W141, and A169 each bind S-adenosyl-L-methionine.

It belongs to the class I-like SAM-binding methyltransferase superfamily. EFM7 family.

Its subcellular location is the cytoplasm. Its function is as follows. S-adenosyl-L-methionine-dependent protein methyltransferase that trimethylates the N-terminal glycine 'Gly-2' of elongation factor 1-alpha, before also catalyzing the mono- and dimethylation of 'Lys-3'. This chain is Protein N-terminal and lysine N-methyltransferase EFM7, found in Gibberella zeae (strain ATCC MYA-4620 / CBS 123657 / FGSC 9075 / NRRL 31084 / PH-1) (Wheat head blight fungus).